We begin with the raw amino-acid sequence, 603 residues long: Elongation factor 4 (603 aa).

Positions S7 to S189 constitute a tr-type G domain. Residues D19–T24 and N136–D139 contribute to the GTP site.

This sequence belongs to the TRAFAC class translation factor GTPase superfamily. Classic translation factor GTPase family. LepA subfamily.

It is found in the cell inner membrane. The catalysed reaction is GTP + H2O = GDP + phosphate + H(+). Its function is as follows. Required for accurate and efficient protein synthesis under certain stress conditions. May act as a fidelity factor of the translation reaction, by catalyzing a one-codon backward translocation of tRNAs on improperly translocated ribosomes. Back-translocation proceeds from a post-translocation (POST) complex to a pre-translocation (PRE) complex, thus giving elongation factor G a second chance to translocate the tRNAs correctly. Binds to ribosomes in a GTP-dependent manner. This Crocosphaera subtropica (strain ATCC 51142 / BH68) (Cyanothece sp. (strain ATCC 51142)) protein is Elongation factor 4.